A 238-amino-acid polypeptide reads, in one-letter code: Probable transcriptional regulatory protein SPH_2064 (238 aa).

Belongs to the TACO1 family. YeeN subfamily.

It localises to the cytoplasm. This chain is Probable transcriptional regulatory protein SPH_2064, found in Streptococcus pneumoniae (strain Hungary19A-6).